A 344-amino-acid chain; its full sequence is Biotin synthase (344 aa).

The 228-residue stretch at 40–267 (AEVQVSTLLS…KSMVRLSAGR (228 aa)) folds into the Radical SAM core domain. [4Fe-4S] cluster-binding residues include Cys-55, Cys-59, and Cys-62. The [2Fe-2S] cluster site is built by Cys-99, Cys-130, Cys-190, and Arg-262.

Belongs to the radical SAM superfamily. Biotin synthase family. Homodimer. It depends on [4Fe-4S] cluster as a cofactor. [2Fe-2S] cluster is required as a cofactor.

It carries out the reaction (4R,5S)-dethiobiotin + (sulfur carrier)-SH + 2 reduced [2Fe-2S]-[ferredoxin] + 2 S-adenosyl-L-methionine = (sulfur carrier)-H + biotin + 2 5'-deoxyadenosine + 2 L-methionine + 2 oxidized [2Fe-2S]-[ferredoxin]. Its pathway is cofactor biosynthesis; biotin biosynthesis; biotin from 7,8-diaminononanoate: step 2/2. In terms of biological role, catalyzes the conversion of dethiobiotin (DTB) to biotin by the insertion of a sulfur atom into dethiobiotin via a radical-based mechanism. The polypeptide is Biotin synthase (Xanthomonas campestris pv. campestris (strain 8004)).